Reading from the N-terminus, the 88-residue chain is MAKVVVERVYSIRLRHKMKRYPRWLRAKKAAKYVRKFLSRHMKVEPENVKIDTAVNEKIWERGAEKPPTKIRVRAVKFDDGIVEVELA.

It belongs to the eukaryotic ribosomal protein eL31 family.

The polypeptide is Large ribosomal subunit protein eL31 (rpl31e) (Archaeoglobus fulgidus (strain ATCC 49558 / DSM 4304 / JCM 9628 / NBRC 100126 / VC-16)).